Here is a 324-residue protein sequence, read N- to C-terminus: 4-hydroxy-3-methylbut-2-enyl diphosphate reductase (324 aa).

C28 serves as a coordination point for [4Fe-4S] cluster. Residues H57 and H90 each contribute to the (2E)-4-hydroxy-3-methylbut-2-enyl diphosphate site. 2 residues coordinate dimethylallyl diphosphate: H57 and H90. H57 and H90 together coordinate isopentenyl diphosphate. C112 contributes to the [4Fe-4S] cluster binding site. H140 lines the (2E)-4-hydroxy-3-methylbut-2-enyl diphosphate pocket. Dimethylallyl diphosphate is bound at residue H140. Isopentenyl diphosphate is bound at residue H140. Residue E142 is the Proton donor of the active site. Residue T180 participates in (2E)-4-hydroxy-3-methylbut-2-enyl diphosphate binding. A [4Fe-4S] cluster-binding site is contributed by C210. The (2E)-4-hydroxy-3-methylbut-2-enyl diphosphate site is built by S238, S239, N240, and S282. Positions 238, 239, 240, and 282 each coordinate dimethylallyl diphosphate. Isopentenyl diphosphate-binding residues include S238, S239, N240, and S282.

The protein belongs to the IspH family. Requires [4Fe-4S] cluster as cofactor.

It carries out the reaction isopentenyl diphosphate + 2 oxidized [2Fe-2S]-[ferredoxin] + H2O = (2E)-4-hydroxy-3-methylbut-2-enyl diphosphate + 2 reduced [2Fe-2S]-[ferredoxin] + 2 H(+). It catalyses the reaction dimethylallyl diphosphate + 2 oxidized [2Fe-2S]-[ferredoxin] + H2O = (2E)-4-hydroxy-3-methylbut-2-enyl diphosphate + 2 reduced [2Fe-2S]-[ferredoxin] + 2 H(+). The protein operates within isoprenoid biosynthesis; dimethylallyl diphosphate biosynthesis; dimethylallyl diphosphate from (2E)-4-hydroxy-3-methylbutenyl diphosphate: step 1/1. It functions in the pathway isoprenoid biosynthesis; isopentenyl diphosphate biosynthesis via DXP pathway; isopentenyl diphosphate from 1-deoxy-D-xylulose 5-phosphate: step 6/6. Its function is as follows. Catalyzes the conversion of 1-hydroxy-2-methyl-2-(E)-butenyl 4-diphosphate (HMBPP) into a mixture of isopentenyl diphosphate (IPP) and dimethylallyl diphosphate (DMAPP). Acts in the terminal step of the DOXP/MEP pathway for isoprenoid precursor biosynthesis. The protein is 4-hydroxy-3-methylbut-2-enyl diphosphate reductase of Ralstonia nicotianae (strain ATCC BAA-1114 / GMI1000) (Ralstonia solanacearum).